A 504-amino-acid chain; its full sequence is Maturase K (504 aa).

Belongs to the intron maturase 2 family. MatK subfamily.

It localises to the plastid. It is found in the chloroplast. In terms of biological role, usually encoded in the trnK tRNA gene intron. Probably assists in splicing its own and other chloroplast group II introns. The polypeptide is Maturase K (Arabidopsis halleri).